A 203-amino-acid chain; its full sequence is Octanoyltransferase (203 aa).

The region spanning 32 to 203 (ISTPDEIWLV…LMHKIREIFS (172 aa)) is the BPL/LPL catalytic domain. Residues 71–78 (RGGKITYH), 138–140 (SLG), and 151–153 (GMA) contribute to the substrate site. Cys-169 (acyl-thioester intermediate) is an active-site residue.

The protein belongs to the LipB family.

The protein localises to the cytoplasm. The enzyme catalyses octanoyl-[ACP] + L-lysyl-[protein] = N(6)-octanoyl-L-lysyl-[protein] + holo-[ACP] + H(+). The protein operates within protein modification; protein lipoylation via endogenous pathway; protein N(6)-(lipoyl)lysine from octanoyl-[acyl-carrier-protein]: step 1/2. In terms of biological role, catalyzes the transfer of endogenously produced octanoic acid from octanoyl-acyl-carrier-protein onto the lipoyl domains of lipoate-dependent enzymes. Lipoyl-ACP can also act as a substrate although octanoyl-ACP is likely to be the physiological substrate. The protein is Octanoyltransferase of Buchnera aphidicola subsp. Baizongia pistaciae (strain Bp).